The following is a 274-amino-acid chain: Large ribosomal subunit protein uL2cz/uL2cy (274 aa).

Residues 225-274 (PVDHPHGGGEGRAPIGRKKPVTPWGYPALGRRSRKRKKYSDNLILRRRTK) are disordered.

This sequence belongs to the universal ribosomal protein uL2 family. As to quaternary structure, part of the 50S ribosomal subunit.

The protein localises to the plastid. Its subcellular location is the chloroplast. In Lotus japonicus (Lotus corniculatus var. japonicus), this protein is Large ribosomal subunit protein uL2cz/uL2cy (rpl2-A).